Here is a 236-residue protein sequence, read N- to C-terminus: Biosynthetic peptidoglycan transglycosylase (236 aa).

A helical membrane pass occupies residues 12–31 (ALLWFAAGSIAVVLVLRWVP).

The protein belongs to the glycosyltransferase 51 family.

The protein resides in the cell inner membrane. It carries out the reaction [GlcNAc-(1-&gt;4)-Mur2Ac(oyl-L-Ala-gamma-D-Glu-L-Lys-D-Ala-D-Ala)](n)-di-trans,octa-cis-undecaprenyl diphosphate + beta-D-GlcNAc-(1-&gt;4)-Mur2Ac(oyl-L-Ala-gamma-D-Glu-L-Lys-D-Ala-D-Ala)-di-trans,octa-cis-undecaprenyl diphosphate = [GlcNAc-(1-&gt;4)-Mur2Ac(oyl-L-Ala-gamma-D-Glu-L-Lys-D-Ala-D-Ala)](n+1)-di-trans,octa-cis-undecaprenyl diphosphate + di-trans,octa-cis-undecaprenyl diphosphate + H(+). It functions in the pathway cell wall biogenesis; peptidoglycan biosynthesis. In terms of biological role, peptidoglycan polymerase that catalyzes glycan chain elongation from lipid-linked precursors. The sequence is that of Biosynthetic peptidoglycan transglycosylase from Pseudomonas entomophila (strain L48).